Consider the following 1046-residue polypeptide: UDP-N-acetylglucosamine--peptide N-acetylglucosaminyltransferase 110 kDa subunit (1046 aa).

N-acetylalanine is present on Ala2. 2 positions are modified to phosphoserine; by GSK3-beta; alternate: Ser3 and Ser4. O-linked (GlcNAc) serine; alternate glycans are attached at residues Ser3 and Ser4. Ser20 bears the Phosphoserine mark. 12 TPR repeats span residues 21–54 (FQGLAELAHREYQAGDFEAAERHCMQLWRQEPDN), 89–122 (AEAYSNLGNVYKERGQLQEAIEHYRHALRLKPDF), 123–156 (IDGYINLAAALVAAGDMEGAVQAYVSALQYNPDL), 157–190 (YCVRSDLGNLLKALGRLEEAKACYLKAIETQPNF), 191–224 (AVAWSNLGCVFNAQGEIWLAIHHFEKAVTLDPNF), 225–258 (LDAYINLGNVLKEARIFDRAVAAYLRALSLSPNH), 259–292 (AVVHGNLACVYYEQGLIDLAIDTYRRAIELQPHF), 293–326 (PDAYCNLANALKEKGSVAEAEDCYNTALRLCPTH), 327–360 (ADSLNNLANIKREQGNIEEAVRLYRKALEVFPEF), 361–394 (AAAHSNLASVLQQQGKLQEALMHYKEAIRISPTF), 395–428 (ADAYSNMGNTLKEMQDVQGALQCYTRAIQINPAF), and 429–462 (ADAHSNLASIHKDSGNIPEAIASYRTALKLKPDF). Residue Ser399 is glycosylated (O-linked (GlcNAc) serine; by autocatalysis). Thr454 bears the Phosphothreonine mark. The TPR 13; truncated repeat unit spans residues 463–473 (PDAYCNLAHCL). Residues 464-466 (DAY) carry the DFP motif motif. The Nuclear localization signal motif lies at 487-503 (KKLVSIVAEQLEKNRLP). The active-site Proton acceptor is His508. Residues Gln849, Lys852, 906–908 (APK), 911–914 (HVRR), 930–932 (HTT), and Asp935 contribute to the UDP site. Tyr989 is subject to Phosphotyrosine. The segment at 991–1010 (KKIRGKVWKQRISSPLFNTK) is required for phosphatidylinositol 3,4,5-triphosphate binding.

Belongs to the glycosyltransferase 41 family. O-GlcNAc transferase subfamily. In terms of assembly, monomer; may exist in different oligomerization states in cells. Homotrimer, oligomerizes via TPR repeats 6 and 7. Trimerization is not necessary for activity in vitro, however it increases affinity for UDP-GlcNAc. Component of a THAP1/THAP3-HCFC1-OGT complex. Component of the NSL complex at least composed of MOF/KAT8, KANSL1, KANSL2, KANSL3, MCRS1, PHF20, OGT1/OGT, WDR5 and HCFC1. Found in a complex with KIF5B, RHOT1, RHOT2 and TRAK1. Found in a complex composed of at least SINHCAF, SIN3A, HDAC1, SAP30, RBBP4, OGT and TET1. Component of a complex composed of KMT2E/MLL5, OGT and USP7; the complex stabilizes KMT2E/MLL5, preventing KMT2E/MLL5 ubiquitination and proteasomal-mediated degradation. Interacts (via TPRs 1-6) with SIN3A; the interaction mediates transcriptional repression in parallel with histone deacetylase. Interacts (via TPR 5-6) with TET1, TET2 and TET3. Interacts (via TPR repeats 6 and 7) with ATXN10. Interacts with NSD2. Interacts with PROSER1; this interaction mediates TET2 O-GlcNAcylation and stability by promoting the interaction between OGT and TET2. Ubiquitinated by the SCF(FBXO31) complex, leading to its proteasomal degradation. In terms of processing, phosphorylation on Ser-3 or Ser-4 by GSK3-beta positively regulates its activity. Phosphorylation at Thr-454 by AMPK promotes nuclear localization. Post-translationally, glycosylated via autocatalysis; O-GlcNAcylation at Ser-399 promotes nuclear localization.

Its subcellular location is the cytoplasm. The protein resides in the nucleus. It is found in the cell membrane. The protein localises to the mitochondrion membrane. It localises to the cell projection. The enzyme catalyses L-seryl-[protein] + UDP-N-acetyl-alpha-D-glucosamine = 3-O-(N-acetyl-beta-D-glucosaminyl)-L-seryl-[protein] + UDP + H(+). The catalysed reaction is L-threonyl-[protein] + UDP-N-acetyl-alpha-D-glucosamine = 3-O-(N-acetyl-beta-D-glucosaminyl)-L-threonyl-[protein] + UDP + H(+). It participates in protein modification; protein glycosylation. With respect to regulation, subject to product inhibition by UDP. In terms of biological role, catalyzes the transfer of a single N-acetylglucosamine from UDP-GlcNAc to a serine or threonine residue in cytoplasmic and nuclear proteins resulting in their modification with a beta-linked N-acetylglucosamine (O-GlcNAc). Glycosylates a large and diverse number of proteins including histone H2B, AKT1, AMPK, ATG4B, CAPRIN1, EZH2, FNIP1, GSDMD, KRT7, LMNA, LMNB1, LMNB2, RPTOR, HOXA1, PFKL, KMT2E/MLL5, MAPT/TAU, TET2, RBL2, RET, NOD2 and HCFC1. Can regulate their cellular processes via cross-talk between glycosylation and phosphorylation or by affecting proteolytic processing. Involved in insulin resistance in muscle and adipocyte cells via glycosylating insulin signaling components and inhibiting the 'Thr-308' phosphorylation of AKT1, enhancing IRS1 phosphorylation and attenuating insulin signaling. Involved in glycolysis regulation by mediating glycosylation of 6-phosphofructokinase PFKL, inhibiting its activity. Plays a key role in chromatin structure by mediating O-GlcNAcylation of 'Ser-112' of histone H2B: recruited to CpG-rich transcription start sites of active genes via its interaction with TET proteins (TET1, TET2 or TET3). As part of the NSL complex indirectly involved in acetylation of nucleosomal histone H4 on several lysine residues. O-GlcNAcylation of 'Ser-75' of EZH2 increases its stability, and facilitating the formation of H3K27me3 by the PRC2/EED-EZH2 complex. Stabilizes KMT2E/MLL5 by mediating its glycosylation, thereby preventing KMT2E/MLL5 ubiquitination. Regulates circadian oscillation of the clock genes and glucose homeostasis in the liver. Stabilizes clock proteins BMAL1 and CLOCK through O-glycosylation, which prevents their ubiquitination and subsequent degradation. Promotes the CLOCK-BMAL1-mediated transcription of genes in the negative loop of the circadian clock such as PER1/2 and CRY1/2. O-glycosylates HCFC1 and regulates its proteolytic processing and transcriptional activity. Component of a THAP1/THAP3-HCFC1-OGT complex that is required for the regulation of the transcriptional activity of RRM1. Regulates mitochondrial motility in neurons by mediating glycosylation of TRAK1. Promotes autophagy by mediating O-glycosylation of ATG4B. Acts as a regulator of mTORC1 signaling by mediating O-glycosylation of RPTOR and FNIP1: O-GlcNAcylation of RPTOR in response to glucose sufficiency promotes activation of the mTORC1 complex. This is UDP-N-acetylglucosamine--peptide N-acetylglucosaminyltransferase 110 kDa subunit (Ogt) from Mus musculus (Mouse).